The chain runs to 109 residues: Transcription initiation factor IIA subunit 2 (109 aa).

This sequence belongs to the TFIIA subunit 2 family. In terms of assembly, TFIIA is a heterodimer of the large unprocessed subunit 1 and a small subunit gamma. It was originally believed to be a heterotrimer of an alpha (p35), a beta (p19) and a gamma subunit (p12). Interacts with NCOA6 general coactivator. TFIIA forms a complex with TBP. Interacts with HSF1 (via transactivation domain). Part of TBP-based Pol II pre-initiation complex (PIC), in which Pol II core assembles with general transcription factors and other specific initiation factors including GTF2E1, GTF2E2, GTF2F1, GTF2F2, TCEA1, ERCC2, ERCC3, GTF2H2, GTF2H3, GTF2H4, GTF2H5, GTF2A1, GTF2A2, GTF2B and TBP; this large multi-subunit PIC complex mediates DNA unwinding and targets Pol II core to the transcription start site where the first phosphodiester bond forms. As to quaternary structure, (Microbial infection) Interacts with SV40 Large T antigen.

Its subcellular location is the nucleus. Functionally, TFIIA is a component of the transcription machinery of RNA polymerase II and plays an important role in transcriptional activation. TFIIA in a complex with TBP mediates transcriptional activity. This chain is Transcription initiation factor IIA subunit 2 (GTF2A2), found in Homo sapiens (Human).